The primary structure comprises 211 residues: Outer-membrane lipoprotein carrier protein (211 aa).

The first 24 residues, 1–24 (MRNRILVSACAALAMFAMQAPAHA), serve as a signal peptide directing secretion.

Belongs to the LolA family. In terms of assembly, monomer.

The protein localises to the periplasm. Functionally, participates in the translocation of lipoproteins from the inner membrane to the outer membrane. Only forms a complex with a lipoprotein if the residue after the N-terminal Cys is not an aspartate (The Asp acts as a targeting signal to indicate that the lipoprotein should stay in the inner membrane). This is Outer-membrane lipoprotein carrier protein from Cupriavidus taiwanensis (strain DSM 17343 / BCRC 17206 / CCUG 44338 / CIP 107171 / LMG 19424 / R1) (Ralstonia taiwanensis (strain LMG 19424)).